The primary structure comprises 322 residues: Corticotropin-releasing factor-binding protein (322 aa).

The signal sequence occupies residues 1 to 24 (MSPNFKLQCHFILILLTALRGESR). Disulfide bonds link Cys60–Cys81, Cys104–Cys141, Cys183–Cys205, Cys237–Cys264, and Cys277–Cys318. An N-linked (GlcNAc...) asparagine glycan is attached at Asn204.

Belongs to the CRF-binding protein family.

It localises to the secreted. Functionally, binds CRF and inactivates it. May prevent inappropriate pituitary-adrenal stimulation in pregnancy. The polypeptide is Corticotropin-releasing factor-binding protein (Crhbp) (Mus musculus (Mouse)).